A 303-amino-acid polypeptide reads, in one-letter code: MNKDQTLSHTTGRVSFKELQQIIKMGLVQGNLIPAFAGAWLAIVMTNHSFLSSIPQILLMLVGSTLIMGGACALNNYYDQDIDRIMPSKQGRPTVNDRISDRNLLMLSFGMMLIGEACLFLLNIPSGVLGLIGIVGYVSYYSIWSKRHTTWNTVVGSFPGAVPPLIGWVAIDGSLSLAAVALFLVVFCWQPIHFYALAIKRSDEYALANIPMLPSVKGFKRTRVSMFIWLVLLLPLPFLLSNLGVTFVVIATLLNLGWLALGFTTFRKESNQTKWATQMFVYSLNYLVVFFALVVVVSLIKMI.

6 helical membrane passes run 25-45, 54-74, 118-138, 166-186, 230-250, and 280-300; these read MGLV…AIVM, IPQI…ACAL, CLFL…VGYV, IGWV…FLVV, LVLL…FVVI, and FVYS…VSLI.

Belongs to the UbiA prenyltransferase family. Protoheme IX farnesyltransferase subfamily. As to quaternary structure, interacts with CtaA.

The protein localises to the cell membrane. The enzyme catalyses heme b + (2E,6E)-farnesyl diphosphate + H2O = Fe(II)-heme o + diphosphate. Its pathway is porphyrin-containing compound metabolism; heme O biosynthesis; heme O from protoheme: step 1/1. Functionally, converts heme B (protoheme IX) to heme O by substitution of the vinyl group on carbon 2 of heme B porphyrin ring with a hydroxyethyl farnesyl side group. The sequence is that of Protoheme IX farnesyltransferase from Staphylococcus epidermidis (strain ATCC 12228 / FDA PCI 1200).